A 379-amino-acid polypeptide reads, in one-letter code: Cystathionine gamma-lyase (379 aa).

Lysine 195 carries the post-translational modification N6-(pyridoxal phosphate)lysine.

It belongs to the trans-sulfuration enzymes family. The cofactor is pyridoxal 5'-phosphate.

The enzyme catalyses L,L-cystathionine + H2O = 2-oxobutanoate + L-cysteine + NH4(+). It catalyses the reaction L-homocysteine + H2O = 2-oxobutanoate + hydrogen sulfide + NH4(+) + H(+). Catalyzes the conversion of cystathionine to cysteine, and homocysteine to sulfide. The protein is Cystathionine gamma-lyase (mccB) of Bacillus subtilis (strain 168).